Consider the following 581-residue polypeptide: Proline--tRNA ligase 1 (581 aa).

The protein belongs to the class-II aminoacyl-tRNA synthetase family. ProS type 1 subfamily. In terms of assembly, homodimer.

The protein localises to the cytoplasm. It catalyses the reaction tRNA(Pro) + L-proline + ATP = L-prolyl-tRNA(Pro) + AMP + diphosphate. Functionally, catalyzes the attachment of proline to tRNA(Pro) in a two-step reaction: proline is first activated by ATP to form Pro-AMP and then transferred to the acceptor end of tRNA(Pro). As ProRS can inadvertently accommodate and process non-cognate amino acids such as alanine and cysteine, to avoid such errors it has two additional distinct editing activities against alanine. One activity is designated as 'pretransfer' editing and involves the tRNA(Pro)-independent hydrolysis of activated Ala-AMP. The other activity is designated 'posttransfer' editing and involves deacylation of mischarged Ala-tRNA(Pro). The misacylated Cys-tRNA(Pro) is not edited by ProRS. In Rhodococcus jostii (strain RHA1), this protein is Proline--tRNA ligase 1.